Consider the following 296-residue polypeptide: Putative F-box protein At1g67623 (296 aa).

Residues 21–70 (SLCLDSLPEDLLVEISSCTGASSLSAVRNLRLVSKSFRRICDEKYVFYRL) form the F-box domain.

In Arabidopsis thaliana (Mouse-ear cress), this protein is Putative F-box protein At1g67623.